Consider the following 338-residue polypeptide: MTDRYILAVESSCDETSVAILKNDNVLLTNIIASQVESHKRFGGVVPEVASRHHVEVITTCFDDALKEAQLEASDLTAVAVTYGPGLVGALLVGLAAAKAFAWANDLPLIPVNHMAGHLMAAREQGELEYPLMALLVSGGHTELVYVTEPGEYHIVGETRDDAVGEAYDKVGRVMGLPYPAGREIDQLAHQGTDTYHFPRAMMKEDHLEFSFSGLKSAFINLHHNAQQKGEELVLEDLCASFQAAVLDILLAKTKKALKQYPSKMLVVAGGVAANQGLRERLAEEITDIAVVIPPLRLCGDNAGMIALAAVVEYEKGHVAGLDLNAKPSLAFDSFHQQ.

Fe cation-binding residues include histidine 114 and histidine 118. Substrate is bound by residues 136–140 (LVSGG), aspartate 169, glycine 182, aspartate 186, and asparagine 275. A Fe cation-binding site is contributed by aspartate 301.

Belongs to the KAE1 / TsaD family. It depends on Fe(2+) as a cofactor.

Its subcellular location is the cytoplasm. It carries out the reaction L-threonylcarbamoyladenylate + adenosine(37) in tRNA = N(6)-L-threonylcarbamoyladenosine(37) in tRNA + AMP + H(+). Functionally, required for the formation of a threonylcarbamoyl group on adenosine at position 37 (t(6)A37) in tRNAs that read codons beginning with adenine. Is involved in the transfer of the threonylcarbamoyl moiety of threonylcarbamoyl-AMP (TC-AMP) to the N6 group of A37, together with TsaE and TsaB. TsaD likely plays a direct catalytic role in this reaction. The chain is tRNA N6-adenosine threonylcarbamoyltransferase from Streptococcus equi subsp. equi (strain 4047).